Here is a 256-residue protein sequence, read N- to C-terminus: uncharacterized protein (256 aa).

A signal peptide spans 1–23 (MKRLNKLVLGIIFLFLVISITAG). Cys24 carries N-palmitoyl cysteine lipidation. Cys24 carries S-diacylglycerol cysteine lipidation.

Belongs to the staphylococcal tandem lipoprotein family.

It localises to the cell membrane. This is an uncharacterized protein from Staphylococcus aureus (strain COL).